Reading from the N-terminus, the 461-residue chain is Ribulose bisphosphate carboxylase (461 aa).

Position 112 (Asn-112) interacts with substrate. Residue Lys-167 is the Proton acceptor of the active site. Substrate is bound at residue Lys-169. Residues Lys-192, Asp-194, and Glu-195 each contribute to the Mg(2+) site. The residue at position 192 (Lys-192) is an N6-carboxylysine. His-288 serves as the catalytic Proton acceptor. Arg-289, His-322, and Ser-369 together coordinate substrate.

This sequence belongs to the RuBisCO large chain family. Type II subfamily. As to quaternary structure, homodimer. Mg(2+) is required as a cofactor.

The enzyme catalyses 2 (2R)-3-phosphoglycerate + 2 H(+) = D-ribulose 1,5-bisphosphate + CO2 + H2O. It carries out the reaction D-ribulose 1,5-bisphosphate + O2 = 2-phosphoglycolate + (2R)-3-phosphoglycerate + 2 H(+). Its function is as follows. RuBisCO catalyzes two reactions: the carboxylation of D-ribulose 1,5-bisphosphate, the primary event in carbon dioxide fixation, as well as the oxidative fragmentation of the pentose substrate. Both reactions occur simultaneously and in competition at the same active site. This chain is Ribulose bisphosphate carboxylase, found in Rhodopseudomonas palustris (strain HaA2).